A 402-amino-acid chain; its full sequence is B box and SPRY domain-containing protein (402 aa).

Residues 1–20 (MSAEGAEPGPGSGSGPGPGP) form a disordered region. A B box-type zinc finger spans residues 17-65 (GPGPLCPEHGQALSWFCGSERRPVCAACAGLGGRCRGHRIRRAEERAEE). Residues 212-402 (PLLTQLWATA…VADQTISIVR (191 aa)) enclose the B30.2/SPRY domain.

In terms of assembly, interacts with TRPV5 and TRPV6. Interacts with YWHAZ/14-3-3 protein zeta.

Its subcellular location is the cytoplasm. It localises to the membrane. Its function is as follows. May regulate epithelial calcium transport by inhibiting TRPV5 activity. The chain is B box and SPRY domain-containing protein (BSPRY) from Homo sapiens (Human).